Consider the following 75-residue polypeptide: Porwaprin-d (75 aa).

Positions 1-24 (MSSGGLLLLLGLLTLWAELTPVSS) are cleaved as a signal peptide. Residues 27 to 72 (RPKKPGLCPPRPQKPPCVRECKNDWRCPGEQKCCRYGCIYECRDPI) enclose the WAP domain. Intrachain disulfides connect Cys34-Cys60, Cys43-Cys64, Cys47-Cys59, and Cys53-Cys68.

It belongs to the venom waprin family. As to expression, expressed by the venom gland.

It is found in the secreted. Functionally, damages membranes of susceptible bacteria. Has no hemolytic activity. Not toxic to mice. Does not inhibit the proteinases elastase and cathepsin G. This chain is Porwaprin-d, found in Pseudechis porphyriacus (Red-bellied black snake).